We begin with the raw amino-acid sequence, 615 residues long: 70 kDa neurofilament protein (615 aa).

The segment at methionine 1–tyrosine 31 is disordered. The head stretch occupies residues methionine 1–aspartate 99. Positions arginine 21–serine 30 are enriched in polar residues. Positions glutamate 96 to valine 449 constitute an IF rod domain. The coil 1A stretch occupies residues methionine 100 to tryptophan 135. The linker 1 stretch occupies residues glycine 136–methionine 145. A coil 1B region spans residues tyrosine 146–alanine 284. The segment at alanine 285–leucine 303 is linker 12. The segment at alanine 304 to valine 449 is coil 2. The tract at residues glycine 450–glutamine 615 is tail. The LTD domain maps to alanine 499–threonine 612.

It belongs to the intermediate filament family.

This chain is 70 kDa neurofilament protein, found in Doryteuthis pealeii (Longfin inshore squid).